The sequence spans 535 residues: Putative cysteine ligase BshC (535 aa).

A coiled-coil region spans residues 420–477 (DTFKALKESINSAYKNLQEKLAPLGADFQKLTGENLGRVMAQVKYLEERAQKYHREKN).

Belongs to the BshC family.

In terms of biological role, involved in bacillithiol (BSH) biosynthesis. May catalyze the last step of the pathway, the addition of cysteine to glucosamine malate (GlcN-Mal) to generate BSH. In Carboxydothermus hydrogenoformans (strain ATCC BAA-161 / DSM 6008 / Z-2901), this protein is Putative cysteine ligase BshC.